The following is a 264-amino-acid chain: MSDPYMPLTSVRSGAGFEAAKGVHGLTVQIANVYFIQLPSEPHSFVLIDAGMPQSAGVIVNEAKQRFGEGFQLKAIILTHGHFDHIGAIEEILEHWDVPVYIHSREMPYVTGKEDYPPARPDSKSGLVAKLSPLFPRHSIDISSHVQALPEDGSVPFLDEWMWIATPGHTPGHISLFRDDGRVLVAGDAVITVEQEKMADVLIQKQELHGPPAYFTPDTETAAESILKLAGLEPEALLTGHGIPMTGKNFRSDLTELANRLSSI.

Zn(2+) contacts are provided by histidine 80, histidine 82, aspartate 84, histidine 85, histidine 169, aspartate 188, and histidine 241.

It belongs to the metallo-beta-lactamase superfamily. Zn(2+) is required as a cofactor.

The sequence is that of Probable metallo-hydrolase YflN (yflN) from Bacillus subtilis (strain 168).